Consider the following 190-residue polypeptide: Major intrinsically disordered NOTCH2-binding receptor 1-like (190 aa).

The residue at position 79 (Ser-79) is a Phosphoserine. N-linked (GlcNAc...) asparagine glycosylation is found at Asn-109 and Asn-125. A helical membrane pass occupies residues 169 to 189; the sequence is GLILLVVISILVTIVTIITFF.

This sequence belongs to the MINAR family. In terms of assembly, interacts with NOTCH2. As to expression, highly expressed in the auditory hair cells.

The protein localises to the lysosome membrane. It localises to the endoplasmic reticulum membrane. Its function is as follows. Binds cholesterol and may regulate the distribution and homeostasis of cholesterol in hair cells. May play a role in angiogenesis. This is Major intrinsically disordered NOTCH2-binding receptor 1-like from Homo sapiens (Human).